The sequence spans 314 residues: Putative steroid dehydrogenase 1 (314 aa).

Residue 47-76 participates in NADP(+) binding; the sequence is ASWAVVTGATDGIGKSYSFELAKRGFNVYI. Tyrosine 202 is an active-site residue.

This sequence belongs to the short-chain dehydrogenases/reductases (SDR) family. 17-beta-HSD 3 subfamily.

The sequence is that of Putative steroid dehydrogenase 1 (stdh-1) from Caenorhabditis elegans.